A 2507-amino-acid polypeptide reads, in one-letter code: Highly reducing polyketide synthase lcsB (2507 aa).

The Ketosynthase family 3 (KS3) domain occupies 2–393 (AEPIAVVGMA…GVNAHVIVES (392 aa)). Positions 399 to 501 (NHDRGLSNGS…RNGYSGDDVE (103 aa)) are disordered. 2 stretches are compositionally biased toward polar residues: residues 405–414 (SNGSTTSSSP) and 470–488 (NDTPQSRSTPSNGDQTSHT). Residues 581 to 900 (WVFTGQGAQW…DESLLQLAGK (320 aa)) form a malonyl-CoA:ACP transacylase (MAT) domain region. Residues 953–1080 (HELLGSRVTE…GEARASVDKA (128 aa)) are N-terminal hotdog fold. The dehydratase (DH) domain stretch occupies residues 953 to 1232 (HELLGSRVTE…FKASALTRSD (280 aa)). Positions 953–1234 (HELLGSRVTE…ASALTRSDDE (282 aa)) constitute a PKS/mFAS DH domain. His-984 serves as the catalytic Proton acceptor; for dehydratase activity. Residues 1092–1234 (ARTVDANEWY…ASALTRSDDE (143 aa)) are C-terminal hotdog fold. The Proton donor; for dehydratase activity role is filled by Asp-1151. The methyltransferase (CMet) domain stretch occupies residues 1402-1570 (LGHTNPRLRI…EMVAAGFAEP (169 aa)). The tract at residues 1793-2105 (GLLHTMGWSQ…GGRHIGKIIV (313 aa)) is enoyl reductase (ER) (ER) domain. The tract at residues 2130-2303 (SYLLVGGLGG…ASVIDIGVMG (174 aa)) is ketoreductase (KR) domain. Residues 2425–2503 (EESTVIIATA…SLGDYIRTAL (79 aa)) form the Carrier domain. Ser-2463 carries the O-(pantetheine 4'-phosphoryl)serine modification.

Its pathway is secondary metabolite biosynthesis. Highly reducing polyketide synthase; part of the gene cluster that mediates the biosynthesis of the lipopeptide antibiotics leucinostatins that show extensive biological activities, including antimalarial, antiviral, antibacterial, antifungal, and antitumor activities, as well as phytotoxic. Leucinostatin A contains nine amino acid residues, including the unusual amino acid 4-methyl-L-proline (MePro), 2-amino-6-hydroxy-4-methyl-8-oxodecanoic acid (AHyMeOA), 3-hydroxyleucine (HyLeu), alpha-aminoisobutyric acid (AIB), beta-Ala, a 4-methylhex-2-enoic acid at the N-terminus as well as a N1,N1-dimethylpropane-1,2-diamine (DPD) at the C-terminus. The biosynthesis of leucinostatins is probably initiated with the assembly of 4-methylhex-2-enoic acid by a reducing PKS. Two reducing polyketide synthases, lcsB and lcsC, have been identified in the cluster and it is not clear which is the one that assembles 4-methylhex-2-enoic acid since both contain KS, AT, DH, cMT, ER, KR and ACP domains. The polyketide residue might be transferred to the NRPS lcsA, mediated by two additional enzymes, the acyl-CoA ligase lcsD and the thioesterase lcsE. The linear polyketide carboxylic acid, which is released from PKS, is converted to a CoA thioester by lcsD, and then lcsE hydrolyzes the thiol bond and shuttles the polyketide intermediate to lcsA. The C domain of the first module catalyzed the condensation of 4-methylhex-2-enoic acid and MePro carried by domain A1, followed by successive condensations of nine amino acids to trigger the elongation of the linear peptide. A5 and A6 domains of lcsA are proposed to incorporate leucine, A2 AHyMeOA, and A3 incorporates HyLeu. A4, A7 and A8 incorporate AIB. The AHyMeOA in leucinostatin A activated by the A2 might be produced by the second PKS (lcsB or lcsC) present within the cluster. The MePro is probably produced via leucine cyclization and may originate from a separate pathway, independent of the cluster. Another nonproteinogenic amino acid, beta-Ala, could be produced by an aspartic acid decarboxylase also localized outside of the cluster. Two candidates are VFPBJ_01400 and VFPBJ_10476. The final peptide scaffold may be released by the NAD(P)H-dependent thioester reductase (TE) at the C-terminal region of lcsA. Transamination of the lcsA product by the transaminase lcsP may produce DPD at the C-terminus. Further hydroxylation steps performed alternatively by the cytochrome P450 monooxygenases lcsI, lcsK andr lcsN then yield the non-methylated leucinostatins precursor. It is also possible that leucines can be hydroxylated prior to their incorporation into the peptide. Varying extents of methylation then lead to the formation of leucinostatins A and B. This Purpureocillium lilacinum (Paecilomyces lilacinus) protein is Highly reducing polyketide synthase lcsB.